A 180-amino-acid chain; its full sequence is Large ribosomal subunit protein uL5 (180 aa).

The protein belongs to the universal ribosomal protein uL5 family. Part of the 50S ribosomal subunit; part of the 5S rRNA/L5/L18/L25 subcomplex. Contacts the 5S rRNA and the P site tRNA. Forms a bridge to the 30S subunit in the 70S ribosome.

Functionally, this is one of the proteins that bind and probably mediate the attachment of the 5S RNA into the large ribosomal subunit, where it forms part of the central protuberance. In the 70S ribosome it contacts protein S13 of the 30S subunit (bridge B1b), connecting the 2 subunits; this bridge is implicated in subunit movement. Contacts the P site tRNA; the 5S rRNA and some of its associated proteins might help stabilize positioning of ribosome-bound tRNAs. This is Large ribosomal subunit protein uL5 from Lactiplantibacillus plantarum (strain ATCC BAA-793 / NCIMB 8826 / WCFS1) (Lactobacillus plantarum).